The following is a 204-amino-acid chain: Thymidine kinase (204 aa).

ATP contacts are provided by residues 18–25 and 91–94; these read GSMFSGKT and DEGQ. Glu92 functions as the Proton acceptor in the catalytic mechanism. 4 residues coordinate Zn(2+): Cys148, Cys151, Cys180, and His183.

This sequence belongs to the thymidine kinase family. As to quaternary structure, homotetramer.

The protein localises to the cytoplasm. The catalysed reaction is thymidine + ATP = dTMP + ADP + H(+). This is Thymidine kinase from Bdellovibrio bacteriovorus (strain ATCC 15356 / DSM 50701 / NCIMB 9529 / HD100).